The primary structure comprises 352 residues: Dead end protein homolog 1 (352 aa).

RRM domains are found at residues 58-136 (SEVY…RSTE) and 138-218 (CELT…WLKP). Position 336 is an omega-N-methylarginine (Arg336).

As to quaternary structure, interacts with APOBEC3. As to expression, isoform 1 and isoform 2 are expressed in testis. Isoform 1 is expressed continuously in post natal (PN) testis although levels are low between PN1 to PN6. Isoform 2 is expressed from PN 20 onwards. Isoform 2 is strongly expressed in meiotic and in post-meiotic germ cells of the testis with highest expression at the elongated spermatid stage (at protein level). Expressed in testis and heart. Expressed in germ cells and genital ridges. Not detected in testicular tumors.

The protein resides in the nucleus. It is found in the cytoplasm. Its function is as follows. RNA-binding factor that positively regulates gene expression by prohibiting miRNA-mediated gene suppression. Relieves miRNA repression in germline cells. Prohibits the function of several miRNAs by blocking the accessibility of target mRNAs. Sequence-specific RNA-binding factor that binds specifically to U-rich regions (URRs) in the 3' untranslated region (3'-UTR) of several mRNAs. Does not bind to miRNAs. Isoform 1 may play a role during primordial germ cell (PGC) survival. However, does not seem to be essential for PGC migration. The sequence is that of Dead end protein homolog 1 (Dnd1) from Mus musculus (Mouse).